The sequence spans 433 residues: MDNQQRKVQGSSSNTFIKRAFQHLKSLFTVCFTGADYLESDIELICQNEIQPQGLEKLNADSSNFYCNSLTSNQSLTTSMEALDLSSSLTTPHADKLLKLSNLIAAKSFTTERKLSAAEFLDSREIHNPFTYGFLGILYGTSRTPYLHAQYANSFMSESAVPISIELNNREAKASMNLAEKNFPEGFEDFVSFLENPNIPLTVLLHHVMLYDLYSNNLKDAVWVAVTNYMKNLVGNYGYTELHIRAAQQMFGHPRFLLVHPEDIYCISGSSDWVCVSTQHFHCNIHVHSVSGNAIRKSRNPIIQDLSSICQNSTEFGWLALTHALRKKGAIFPIHAYLNFNAKLYEECIPPSILYFNKNDENINVGNIEDITNYMYETFINEASLCDKFMKRKHERIETPLSSQGREISNTLSRKRGAKGSNPFEIENMMPHA.

A compositionally biased stretch (polar residues) spans 401–412; it reads LSSQGREISNTL. The disordered stretch occupies residues 401 to 433; the sequence is LSSQGREISNTLSRKRGAKGSNPFEIENMMPHA.

This sequence belongs to the UPF0300 family.

It is found in the golgi apparatus. In terms of biological role, has a role in meiosis. The chain is Meiotically up-regulated gene 131 protein (mug131) from Schizosaccharomyces pombe (strain 972 / ATCC 24843) (Fission yeast).